A 293-amino-acid polypeptide reads, in one-letter code: Undecaprenyl-diphosphatase (293 aa).

7 consecutive transmembrane segments (helical) span residues 57–77 (PGVS…IVYF), 106–126 (LAIA…KLFW), 134–154 (IRSL…LALA), 172–192 (GFVV…RSGS), 212–232 (FLLG…DAFA), 239–259 (VLPL…AIDW), and 268–288 (STWI…AWWL).

This sequence belongs to the UppP family.

It localises to the cell inner membrane. The enzyme catalyses di-trans,octa-cis-undecaprenyl diphosphate + H2O = di-trans,octa-cis-undecaprenyl phosphate + phosphate + H(+). Its function is as follows. Catalyzes the dephosphorylation of undecaprenyl diphosphate (UPP). Confers resistance to bacitracin. This chain is Undecaprenyl-diphosphatase, found in Prochlorococcus marinus (strain MIT 9303).